The chain runs to 578 residues: Transcriptional regulator SKO1 (578 aa).

Residues 39-50 show a composition bias toward polar residues; the sequence is NDAISDVNSVAT. 4 disordered regions span residues 39–169, 176–195, 287–311, and 342–489; these read NDAI…TQQP, MSGMRKTGLTPNESNIRSGL, LQQDQSSQALVGGLPPSQPQPQPQP, and ESKP…RKNF. A compositionally biased stretch (low complexity) spans 51–62; sequence SGSSINNGSSSN. Polar residues-rich tracts occupy residues 70 to 80 and 107 to 132; these read NISSVNQQQGV and GGTTSRQYSNSTNSGSLQSNTDTLGS. Low complexity predominate over residues 154–169; it reads PQQQQQPQQQQQTQQP. The span at 184–193 shows a compositional bias: polar residues; it reads LTPNESNIRS. Low complexity-rich tracts occupy residues 287 to 296 and 356 to 370; these read LQQDQSSQAL and DLNPTADTTTNTTTA. The span at 384-402 shows a compositional bias: basic residues; that stretch reads KKAKVAKGKKKEPKSKSKG. The segment covering 415 to 443 has biased composition (basic and acidic residues); that stretch reads KPEDENVPGKENGNEENHKVEAESKEEHL. The span at 445–471 shows a compositional bias: low complexity; it reads NGNETTTTKTNNTGNSSNGTTTTTTTK. Residues 483-546 enclose the bZIP domain; that stretch reads DDKRKNFLER…LLLKEKHNIQ (64 aa). A basic motif region spans residues 485–505; that stretch reads KRKNFLERNRVAASKCRQRKK. Positions 508 to 515 are leucine-zipper; that stretch reads IQKMEEEL.

This sequence belongs to the bZIP family. Post-translationally, undergoes HOG1-dependent phosphorylation after osmotic stress.

It is found in the nucleus. Its function is as follows. Transcription repressor involved in cell wall damage response. Regulates 79 caspofungin-responsive genes, including several cell wall biogenesis genes such as CRH11, MNN2, and SKN1. Also controls the expression of pathogenesis and hyphal related genes and represses the yeast-to-hypha transition. Mediates the response to oxidative stress. The sequence is that of Transcriptional regulator SKO1 (SKO1) from Candida albicans (strain SC5314 / ATCC MYA-2876) (Yeast).